The primary structure comprises 244 residues: Phosphoribosyl isomerase A (244 aa).

The active-site Proton acceptor is Asp-10. The active-site Proton donor is Asp-129.

Belongs to the HisA/HisF family.

The protein resides in the cytoplasm. The enzyme catalyses 1-(5-phospho-beta-D-ribosyl)-5-[(5-phospho-beta-D-ribosylamino)methylideneamino]imidazole-4-carboxamide = 5-[(5-phospho-1-deoxy-D-ribulos-1-ylimino)methylamino]-1-(5-phospho-beta-D-ribosyl)imidazole-4-carboxamide. The catalysed reaction is N-(5-phospho-beta-D-ribosyl)anthranilate = 1-(2-carboxyphenylamino)-1-deoxy-D-ribulose 5-phosphate. It participates in amino-acid biosynthesis; L-histidine biosynthesis; L-histidine from 5-phospho-alpha-D-ribose 1-diphosphate: step 4/9. The protein operates within amino-acid biosynthesis; L-tryptophan biosynthesis; L-tryptophan from chorismate: step 3/5. Its function is as follows. Involved in both the histidine and tryptophan biosynthetic pathways. This Mycobacterium tuberculosis (strain CDC 1551 / Oshkosh) protein is Phosphoribosyl isomerase A (priA).